Consider the following 285-residue polypeptide: Baculoviral IAP repeat-containing protein 7 (285 aa).

A disordered region spans residues 18-47; it reads ESRARDSVRGPELSHREDGSGRTQEQDKPH. Basic and acidic residues predominate over residues 19–47; that stretch reads SRARDSVRGPELSHREDGSGRTQEQDKPH. The BIR repeat unit spans residues 96-161; the sequence is RLASFYDWPS…RWFPRCQFLL (66 aa). Zn(2+)-binding residues include C130, C133, H150, and C157. The segment at 184–225 is disordered; that stretch reads QREEPEDAVSATPSAPAHGSPELLRSRRETQPEDVSEPGAKD. The segment at 239–273 adopts an RING-type zinc-finger fold; it reads CKVCLDRAVSIVFVPCGHFVCTECAPNLQLCPICR.

Belongs to the IAP family. In terms of assembly, binds to caspase-9. Interaction with DIABLO/SMAC via the BIR domain disrupts binding to caspase-9 and apoptotic suppressor activity. Interacts with TAB1. In vitro, interacts with caspase-3 and caspase-7 via its BIR domain. In terms of processing, autoubiquitinated and undergoes proteasome-mediated degradation. Post-translationally, the truncated protein (tLivin) not only loses its anti-apoptotic effect but also acquires a pro-apoptotic effect.

It is found in the nucleus. The protein localises to the cytoplasm. The protein resides in the golgi apparatus. The enzyme catalyses S-ubiquitinyl-[E2 ubiquitin-conjugating enzyme]-L-cysteine + [acceptor protein]-L-lysine = [E2 ubiquitin-conjugating enzyme]-L-cysteine + N(6)-ubiquitinyl-[acceptor protein]-L-lysine.. Its function is as follows. Apoptotic regulator capable of exerting proapoptotic and anti-apoptotic activities and plays crucial roles in apoptosis, cell proliferation, and cell cycle control. Its anti-apoptotic activity is mediated through the inhibition of CASP3, CASP7 and CASP9, as well as by its E3 ubiquitin-protein ligase activity. As it is a weak caspase inhibitor, its anti-apoptotic activity is thought to be due to its ability to ubiquitinate DIABLO/SMAC targeting it for degradation thereby promoting cell survival. May contribute to caspase inhibition, by blocking the ability of DIABLO/SMAC to disrupt XIAP/BIRC4-caspase interactions. Protects against apoptosis induced by TNF or by chemical agents such as adriamycin, etoposide or staurosporine. Suppression of apoptosis is mediated by activation of MAPK8/JNK1, and possibly also of MAPK9/JNK2. This activation depends on TAB1 and MAP3K7/TAK1. In vitro, inhibits CASP3 and proteolytic activation of pro-CASP9. This Mus musculus (Mouse) protein is Baculoviral IAP repeat-containing protein 7 (Birc7).